The following is a 359-amino-acid chain: Protein mab-21-like 2 (359 aa).

The protein belongs to the mab-21 family.

Its subcellular location is the nucleus. The protein localises to the cytoplasm. In terms of biological role, required for eye morphogenesis. May promote the survival of proliferating retinal progenitor cells. The polypeptide is Protein mab-21-like 2 (mab21l2) (Danio rerio (Zebrafish)).